We begin with the raw amino-acid sequence, 370 residues long: NSFL1 cofactor p47 (370 aa).

A disordered region spans residues 54–73; it reads SQATPSSVSRGTAPSDNRVT. 3 positions are modified to phosphoserine: Ser-74, Ser-102, and Ser-114. 2 disordered regions span residues 80–116 and 137–157; these read HDQD…RSPN and VTKS…GYRL. The Nuclear localization signal motif lies at 109–115; it reads PPRKRSP. The residue at position 140 (Ser-140) is a Phosphoserine; by CDK1. Position 167 is a phosphotyrosine (Tyr-167). Positions 172–175 match the Nuclear localization signal motif; sequence RRRH. Phosphoserine occurs at positions 176, 192, and 272. An SEP domain is found at 179–244; sequence DVHVVLKLWK…MEDHRDEDFV (66 aa). The tract at residues 272–292 is disordered; the sequence is SPAQQAENEAKASSSISIDES. The region spanning 291 to 368 is the UBX domain; the sequence is ESQPTTNIQI…NLLNAVIVQR (78 aa).

In terms of assembly, part of a ternary complex containing STX5A, NSFL1C and VCP. NSFL1C forms a homotrimer that binds to one end of a VCP homohexamer. The complex binds to membranes enriched in phosphatidylethanolamine-containing lipids and promotes Golgi membrane fusion. Interaction with VCIP135 leads to dissociation of the complex via ATP hydrolysis by VCP. Binds ubiquitin and mono-ubiquitinated proteins via its N-terminal UBA-like domain when bound to VCP. Post-translationally, phosphorylated during mitosis. Phosphorylation inhibits interaction with Golgi membranes and is required for the fragmentation of the Golgi stacks during mitosis.

It is found in the nucleus. It localises to the golgi apparatus. Its subcellular location is the golgi stack. The protein resides in the chromosome. The protein localises to the cytoplasm. It is found in the cytoskeleton. It localises to the microtubule organizing center. Its subcellular location is the centrosome. In terms of biological role, reduces the ATPase activity of VCP. Necessary for the fragmentation of Golgi stacks during mitosis and for VCP-mediated reassembly of Golgi stacks after mitosis. May play a role in VCP-mediated formation of transitional endoplasmic reticulum (tER). Inhibits the activity of CTSL (in vitro). Together with UBXN2B/p37, regulates the centrosomal levels of kinase AURKA/Aurora A during mitotic progression by promoting AURKA removal from centrosomes in prophase. Also, regulates spindle orientation during mitosis. This is NSFL1 cofactor p47 (NSFL1C) from Bos taurus (Bovine).